Consider the following 232-residue polypeptide: MTMTITVSIFGQFFPETLLFIPMNLFSIVFALSWIAFIYPTNWAPSRFQSIWASFRANVLEMIFQNTSPNTAPWAGLITTVFIVILSANVLGLFPYAFTATSHISLTYSLGFPIWMAVNILGFYLAFNSRLSHLVPQGTPSALIPLMVWIETLSLFAQPIALGLRLAANLTAGHLLIFLLSTAIWLLSSSLMVSSIPIFVIFVLLFILEIGVACIEAYVFTALVHFYLQQNV.

The next 6 membrane-spanning stretches (helical) occupy residues 18-38 (LLFIPMNLFSIVFALSWIAFI), 74-94 (WAGLITTVFIVILSANVLGLF), 107-127 (TYSLGFPIWMAVNILGFYLAF), 142-162 (ALIPLMVWIETLSLFAQPIAL), 173-193 (GHLLIFLLSTAIWLLSSSLMV), and 195-215 (SIPIFVIFVLLFILEIGVACI).

It belongs to the ATPase A chain family. As to quaternary structure, F-type ATPases have 2 components, CF(1) - the catalytic core - and CF(0) - the membrane proton channel. CF(1) has five subunits: alpha(3), beta(3), gamma(1), delta(1), epsilon(1). CF(0) has three main subunits: a, b and c.

The protein localises to the mitochondrion inner membrane. Its function is as follows. Mitochondrial membrane ATP synthase (F(1)F(0) ATP synthase or Complex V) produces ATP from ADP in the presence of a proton gradient across the membrane which is generated by electron transport complexes of the respiratory chain. F-type ATPases consist of two structural domains, F(1) - containing the extramembraneous catalytic core and F(0) - containing the membrane proton channel, linked together by a central stalk and a peripheral stalk. During catalysis, ATP synthesis in the catalytic domain of F(1) is coupled via a rotary mechanism of the central stalk subunits to proton translocation. Key component of the proton channel; it may play a direct role in the translocation of protons across the membrane. The polypeptide is ATP synthase subunit a (ATP6) (Paracentrotus lividus (Common sea urchin)).